Consider the following 143-residue polypeptide: Large ribosomal subunit protein uL13c (143 aa).

Belongs to the universal ribosomal protein uL13 family. In terms of assembly, part of the 50S ribosomal subunit.

It localises to the plastid. It is found in the chloroplast. The polypeptide is Large ribosomal subunit protein uL13c (Gracilaria tenuistipitata var. liui (Red alga)).